The sequence spans 358 residues: B3 domain-containing protein Os12g0592300 (358 aa).

Positions 25–122 (RIRFFRLMTG…SFDVLIFDAS (98 aa)) form a DNA-binding region, TF-B3 1. A disordered region spans residues 148–215 (YHLSDSEDTS…EKSDDDDEHA (68 aa)). Residues 156–181 (TSTPSTFLVGSPHKASTSKKLNGKTK) are compositionally biased toward polar residues. Acidic residues predominate over residues 203 to 215 (IEEEKSDDDDEHA). The segment at residues 252–350 (FVTVLQAPQI…TMTVHVIGKV (99 aa)) is a DNA-binding region (TF-B3 2).

The protein localises to the nucleus. The chain is B3 domain-containing protein Os12g0592300 from Oryza sativa subsp. japonica (Rice).